Reading from the N-terminus, the 48-residue chain is Large ribosomal subunit protein bL33A (48 aa).

The protein belongs to the bacterial ribosomal protein bL33 family.

The chain is Large ribosomal subunit protein bL33A from Metamycoplasma arthritidis (strain 158L3-1) (Mycoplasma arthritidis).